Reading from the N-terminus, the 185-residue chain is MAEAKYEPRLKKEYVERIRKAMQEKFSYANEMMIPKLDKIVINMGVGEATADSKKPTVAAADLAAIAGQKPVITRARNSIAGFKVRENMPIGAKVTLRGARMYEFLDRLVNIALPRVRDFRGLNPKSFDGRGNFAMGIKEHIVFPEINYDKVDQMWGMDIIVCTTATTDDEARTLLKEFSFPFRQ.

This sequence belongs to the universal ribosomal protein uL5 family. Part of the 50S ribosomal subunit; part of the 5S rRNA/L5/L18/L25 subcomplex. Contacts the 5S rRNA and the P site tRNA. Forms a bridge to the 30S subunit in the 70S ribosome.

Its function is as follows. This is one of the proteins that bind and probably mediate the attachment of the 5S RNA into the large ribosomal subunit, where it forms part of the central protuberance. In the 70S ribosome it contacts protein S13 of the 30S subunit (bridge B1b), connecting the 2 subunits; this bridge is implicated in subunit movement. Contacts the P site tRNA; the 5S rRNA and some of its associated proteins might help stabilize positioning of ribosome-bound tRNAs. The polypeptide is Large ribosomal subunit protein uL5 (Rhizobium etli (strain ATCC 51251 / DSM 11541 / JCM 21823 / NBRC 15573 / CFN 42)).